Reading from the N-terminus, the 548-residue chain is Zinc metalloproteinase dpy-31 (548 aa).

Positions 1–24 are cleaved as a signal peptide; the sequence is MSLLRSASLLLVVVTAALPPCTLG. A propeptide spanning residues 25-150 is cleaved from the precursor; the sequence is YSLHDGSRLD…KTGQRRVKRK (126 aa). The 200-residue stretch at 150–349 folds into the Peptidase M12A domain; the sequence is KFIGSDLRRW…IRLMNKIYCS (200 aa). N-linked (GlcNAc...) asparagine glycosylation is present at Asn-190. Intrachain disulfides connect Cys-193–Cys-348, Cys-216–Cys-237, Cys-352–Cys-372, Cys-374–Cys-383, and Cys-394–Cys-422. His-245 serves as a coordination point for Zn(2+). Glu-246 is an active-site residue. Zn(2+) is bound by residues His-249 and His-255. The 41-residue stretch at 344–384 folds into the EGF-like domain; sequence NKIYCSNVCSRKLPCQRGGYTDPRRCDRCRCPDGFTGQFCE. The region spanning 394–510 is the CUB domain; it reads CGGRIQVNSG…RGFEARARAL (117 aa). Asn-461 carries an N-linked (GlcNAc...) asparagine glycan. The region spanning 513-547 is the TSP type-1 domain; it reads NGQWASWTPWTPCTASCGACGSRMRTRVCPHGACP. Cystine bridges form between Cys-525-Cys-546, Cys-529-Cys-546, and Cys-541-Cys-546.

Zn(2+) is required as a cofactor.

It localises to the secreted. Its function is as follows. Metalloprotease which cleaves the carboxyl terminus of procollagens to mature collagens. Probably involved in cuticular collagen maturation. This Haemonchus contortus (Barber pole worm) protein is Zinc metalloproteinase dpy-31.